The following is a 284-amino-acid chain: 2-dehydro-3-deoxyphosphooctonate aldolase (284 aa).

This sequence belongs to the KdsA family.

It localises to the cytoplasm. The catalysed reaction is D-arabinose 5-phosphate + phosphoenolpyruvate + H2O = 3-deoxy-alpha-D-manno-2-octulosonate-8-phosphate + phosphate. It participates in carbohydrate biosynthesis; 3-deoxy-D-manno-octulosonate biosynthesis; 3-deoxy-D-manno-octulosonate from D-ribulose 5-phosphate: step 2/3. Its pathway is bacterial outer membrane biogenesis; lipopolysaccharide biosynthesis. This is 2-dehydro-3-deoxyphosphooctonate aldolase from Photorhabdus laumondii subsp. laumondii (strain DSM 15139 / CIP 105565 / TT01) (Photorhabdus luminescens subsp. laumondii).